Reading from the N-terminus, the 136-residue chain is Holo-[acyl-carrier-protein] synthase (136 aa).

Mg(2+)-binding residues include Asp-8 and Glu-58.

It belongs to the P-Pant transferase superfamily. AcpS family. Mg(2+) is required as a cofactor.

It localises to the cytoplasm. The enzyme catalyses apo-[ACP] + CoA = holo-[ACP] + adenosine 3',5'-bisphosphate + H(+). Functionally, transfers the 4'-phosphopantetheine moiety from coenzyme A to a Ser of acyl-carrier-protein. This chain is Holo-[acyl-carrier-protein] synthase, found in Leuconostoc mesenteroides subsp. mesenteroides (strain ATCC 8293 / DSM 20343 / BCRC 11652 / CCM 1803 / JCM 6124 / NCDO 523 / NBRC 100496 / NCIMB 8023 / NCTC 12954 / NRRL B-1118 / 37Y).